A 144-amino-acid chain; its full sequence is Large ribosomal subunit protein uL15 (144 aa).

The interval 1–53 is disordered; that stretch reads MRLNTLSPAEGAKHNAKRLGRGIGSGLGKTSGRGHKGQKARTGGGVRRGFEGG. The span at 21-31 shows a compositional bias: gly residues; that stretch reads RGIGSGLGKTS.

The protein belongs to the universal ribosomal protein uL15 family. As to quaternary structure, part of the 50S ribosomal subunit.

Binds to the 23S rRNA. This Histophilus somni (strain 129Pt) (Haemophilus somnus) protein is Large ribosomal subunit protein uL15.